The chain runs to 514 residues: L-carnitine/gamma-butyrobetaine antiporter (514 aa).

The Cytoplasmic segment spans residues Met-1–Glu-11. A helical membrane pass occupies residues Pro-12–Val-30. Topologically, residues Arg-31–Ala-42 are periplasmic. Residues Val-43–Trp-68 traverse the membrane as a helical segment. Over Leu-69–Trp-91 the chain is Cytoplasmic. The chain crosses the membrane as a helical span at residues Ile-92–Ile-112. The Periplasmic portion of the chain corresponds to Tyr-113–Lys-131. Residues Glu-132 to Ser-154 form a helical membrane-spanning segment. Residues Val-155–Asn-185 are Cytoplasmic-facing. A helical transmembrane segment spans residues Gly-186 to Thr-216. The Periplasmic segment spans residues Glu-217–Gln-230. A helical transmembrane segment spans residues Leu-231–Phe-249. The Cytoplasmic segment spans residues Gly-250 to Leu-251. Residues Gln-252–Gly-277 form a helical membrane-spanning segment. Residues Gly-278–Gly-311 are Periplasmic-facing. A helical membrane pass occupies residues Phe-312–Leu-335. At Ala-336–Leu-347 the chain is on the cytoplasmic side. The helical transmembrane segment at Cys-348–Asn-369 threads the bilayer. Residues Thr-370–Ser-404 lie on the Periplasmic side of the membrane. The chain crosses the membrane as a helical span at residues Thr-405–Thr-434. The Cytoplasmic portion of the chain corresponds to Cys-435 to Pro-445. The chain crosses the membrane as a helical span at residues Leu-446 to Leu-464. The Periplasmic portion of the chain corresponds to Ala-465–Gly-468. Residues Leu-469 to Leu-492 traverse the membrane as a helical segment. Topologically, residues Ser-493–His-514 are cytoplasmic.

The protein belongs to the BCCT transporter (TC 2.A.15) family. CaiT subfamily. In terms of assembly, homotrimer.

Its subcellular location is the cell inner membrane. It catalyses the reaction 4-(trimethylamino)butanoate(in) + (R)-carnitine(out) = 4-(trimethylamino)butanoate(out) + (R)-carnitine(in). Its pathway is amine and polyamine metabolism; carnitine metabolism. Functionally, catalyzes the exchange of L-carnitine for gamma-butyrobetaine. The protein is L-carnitine/gamma-butyrobetaine antiporter of Proteus mirabilis (strain HI4320).